Here is a 679-residue protein sequence, read N- to C-terminus: Protein CASP (679 aa).

The Cytoplasmic portion of the chain corresponds to 1–614; that stretch reads MDTSVYSHAL…VILQNKMTRM (614 aa). 2 coiled-coil regions span residues 14–90 and 178–341; these read AKAD…EKVL and RNWK…NYSD. S364 carries the phosphoserine modification. Residues 385 to 444 are a coiled coil; the sequence is ANKKLQATLAEYRSKSTAQEEERNELKKSVDQLKQQIATLKEANEKLETDLEKVENVSPH. 2 positions are modified to phosphoserine: S450 and S453. Residues 492–540 are a coiled coil; sequence IVTKQRDRFRSRNMDLEKQLRQGNSEKGKLKLEISKLKGDNTKLYERIR. S555 is subject to Phosphoserine. Residues 615-635 traverse the membrane as a helical; Anchor for type IV membrane protein segment; the sequence is VFLFYCIGLHGLVFMMSMYVI. The Lumenal segment spans residues 636–679; that stretch reads NISGYMTPEVGIVQSAKSSSNLNGGLGGAEKVAAGVGSVHGINR.

This sequence belongs to the CASP family.

It localises to the golgi apparatus membrane. In terms of biological role, may be involved in intra-Golgi transport. The polypeptide is Protein CASP (COY1) (Saccharomyces cerevisiae (strain ATCC 204508 / S288c) (Baker's yeast)).